The primary structure comprises 219 residues: MKLTKFLTVFIPFIAGLIYYIQKYHLRSFYQFDPAKLQELSKQSIALYANDTKALLYDLSDRLVAEYGDLITPVNQDEWVHNNAGGAMGTMFILHASFSEYLIFFGTPIGTEGHSGVHMADDYFTILRGRQLAASANDLEARVYLPGDQHVHPWGHTAQYSMPSGEPCFALELAQGWIVSMLPFGFMDGLFSTIDFGTLYKTVYFTAGRMLKSVLMGKF.

Residues 1-21 (MKLTKFLTVFIPFIAGLIYYI) traverse the membrane as a helical segment.

Belongs to the ERG2 family.

Its subcellular location is the endoplasmic reticulum membrane. The enzyme catalyses fecosterol = episterol. Its pathway is steroid metabolism; ergosterol biosynthesis. Its function is as follows. C-8 sterol isomerase; part of the third module of ergosterol biosynthesis pathway that includes by the late steps of the pathway. Erg2 catalyzes the reaction which results in unsaturation at C-7 in the B ring of sterols and thus converts fecosterol to episterol. The third module or late pathway involves the ergosterol synthesis itself through consecutive reactions that mainly occur in the endoplasmic reticulum (ER) membrane. Firstly, the squalene synthase erg9 catalyzes the condensation of 2 farnesyl pyrophosphate moieties to form squalene, which is the precursor of all steroids. Secondly, squalene is converted into lanosterol by the consecutive action of the squalene epoxidase erg1 and the lanosterol synthase erg7. The lanosterol 14-alpha-demethylase erg11/cyp1 catalyzes C14-demethylation of lanosterol to produce 4,4'-dimethyl cholesta-8,14,24-triene-3-beta-ol. In the next steps, a complex process involving various demethylation, reduction and desaturation reactions catalyzed by the C-14 reductase erg24 and the C-4 demethylation complex erg25-erg26-erg27 leads to the production of zymosterol. Erg28 likely functions in the C-4 demethylation complex reaction by tethering erg26 and Erg27 to the endoplasmic reticulum or to facilitate interaction between these proteins. Then, the sterol 24-C-methyltransferase erg6 catalyzes the methyl transfer from S-adenosyl-methionine to the C-24 of zymosterol to form fecosterol. The C-8 sterol isomerase erg2 catalyzes the reaction which results in unsaturation at C-7 in the B ring of sterols and thus converts fecosterol to episterol. The sterol-C5-desaturases erg31 and erg32 then catalyze the introduction of a C-5 double bond in the B ring to produce 5-dehydroepisterol. The C-22 sterol desaturase erg5 further converts 5-dehydroepisterol into ergosta-5,7,22,24(28)-tetraen-3beta-ol by forming the C-22(23) double bond in the sterol side chain. Finally, ergosta-5,7,22,24(28)-tetraen-3beta-ol is substrate of the C-24(28) sterol reductase erg4 to produce ergosterol. In the genus Schizosaccharomyces, a second route exists between lanosterol and fecosterol, via the methylation of lanosterol to eburicol by erg6, followed by C14-demethylation by erg11/cyp1 and C4-demethylation by the demethylation complex erg25-erg26-erg27. This Schizosaccharomyces pombe (strain 972 / ATCC 24843) (Fission yeast) protein is C-8 sterol isomerase erg2.